We begin with the raw amino-acid sequence, 595 residues long: Elongation factor 4 (595 aa).

The 183-residue stretch at 2–184 folds into the tr-type G domain; it reads SHIRNFSIIA…RLVATIPAPT (183 aa). Residues 14–19 and 131–134 each bind GTP; these read DHGKST and NKMD.

It belongs to the TRAFAC class translation factor GTPase superfamily. Classic translation factor GTPase family. LepA subfamily.

It localises to the cell inner membrane. It carries out the reaction GTP + H2O = GDP + phosphate + H(+). Functionally, required for accurate and efficient protein synthesis under certain stress conditions. May act as a fidelity factor of the translation reaction, by catalyzing a one-codon backward translocation of tRNAs on improperly translocated ribosomes. Back-translocation proceeds from a post-translocation (POST) complex to a pre-translocation (PRE) complex, thus giving elongation factor G a second chance to translocate the tRNAs correctly. Binds to ribosomes in a GTP-dependent manner. The polypeptide is Elongation factor 4 (Pseudomonas savastanoi pv. phaseolicola (strain 1448A / Race 6) (Pseudomonas syringae pv. phaseolicola (strain 1448A / Race 6))).